We begin with the raw amino-acid sequence, 91 residues long: Putative regulatory protein Cyan7425_4125 (91 aa).

It belongs to the RemA family.

The polypeptide is Putative regulatory protein Cyan7425_4125 (Cyanothece sp. (strain PCC 7425 / ATCC 29141)).